The following is a 141-amino-acid chain: Large ribosomal subunit protein uL11 (141 aa).

It belongs to the universal ribosomal protein uL11 family. Part of the ribosomal stalk of the 50S ribosomal subunit. Interacts with L10 and the large rRNA to form the base of the stalk. L10 forms an elongated spine to which L12 dimers bind in a sequential fashion forming a multimeric L10(L12)X complex. In terms of processing, one or more lysine residues are methylated.

Its function is as follows. Forms part of the ribosomal stalk which helps the ribosome interact with GTP-bound translation factors. The sequence is that of Large ribosomal subunit protein uL11 from Acaryochloris marina (strain MBIC 11017).